The following is a 660-amino-acid chain: Bifunctional polymyxin resistance protein ArnA (660 aa).

Residues 1 to 304 (MKAIVFAYHD…EMGIVTDVRL (304 aa)) are formyltransferase ArnAFT. Residue histidine 104 is the Proton donor; for formyltransferase activity of the active site. (6R)-10-formyltetrahydrofolate-binding positions include arginine 114 and 136-140 (VKRPD). A dehydrogenase ArnADH region spans residues 314 to 660 (RRTRVLILGV…RTTVQEGDGA (347 aa)). NAD(+) contacts are provided by residues aspartate 347 and 368–369 (DI). UDP-alpha-D-glucuronate-binding positions include alanine 393, tyrosine 398, and 432–433 (TS). The Proton acceptor; for decarboxylase activity role is filled by glutamate 434. UDP-alpha-D-glucuronate contacts are provided by residues arginine 460, asparagine 492, 526-535 (KLMDGGAQKR), and tyrosine 613. Arginine 619 (proton donor; for decarboxylase activity) is an active-site residue.

In the N-terminal section; belongs to the Fmt family. UDP-L-Ara4N formyltransferase subfamily. It in the C-terminal section; belongs to the NAD(P)-dependent epimerase/dehydratase family. UDP-glucuronic acid decarboxylase subfamily. In terms of assembly, homohexamer, formed by a dimer of trimers.

The enzyme catalyses UDP-alpha-D-glucuronate + NAD(+) = UDP-beta-L-threo-pentopyranos-4-ulose + CO2 + NADH. The catalysed reaction is UDP-4-amino-4-deoxy-beta-L-arabinose + (6R)-10-formyltetrahydrofolate = UDP-4-deoxy-4-formamido-beta-L-arabinose + (6S)-5,6,7,8-tetrahydrofolate + H(+). The protein operates within nucleotide-sugar biosynthesis; UDP-4-deoxy-4-formamido-beta-L-arabinose biosynthesis; UDP-4-deoxy-4-formamido-beta-L-arabinose from UDP-alpha-D-glucuronate: step 1/3. It participates in nucleotide-sugar biosynthesis; UDP-4-deoxy-4-formamido-beta-L-arabinose biosynthesis; UDP-4-deoxy-4-formamido-beta-L-arabinose from UDP-alpha-D-glucuronate: step 3/3. It functions in the pathway bacterial outer membrane biogenesis; lipopolysaccharide biosynthesis. Its function is as follows. Bifunctional enzyme that catalyzes the oxidative decarboxylation of UDP-glucuronic acid (UDP-GlcUA) to UDP-4-keto-arabinose (UDP-Ara4O) and the addition of a formyl group to UDP-4-amino-4-deoxy-L-arabinose (UDP-L-Ara4N) to form UDP-L-4-formamido-arabinose (UDP-L-Ara4FN). The modified arabinose is attached to lipid A and is required for resistance to polymyxin and cationic antimicrobial peptides. This is Bifunctional polymyxin resistance protein ArnA from Serratia proteamaculans (strain 568).